Reading from the N-terminus, the 779-residue chain is Kazrin (779 aa).

Residues A79 to K261 are a coiled coil. The disordered stretch occupies residues Q295–N366. 3 positions are modified to phosphoserine: S356, S371, and S391. Residues K403–G429 are disordered. Over residues S415–L426 the composition is skewed to polar residues. 3 SAM domains span residues W450–A515, D528–V592, and W616–F683. Residues P685 to V779 form a disordered region. Over residues S736 to Y746 the composition is skewed to basic and acidic residues.

Belongs to the kazrin family. Expressed in skin interfollicular epidermis and hair follicles. Expressed in tongue epithelium basal suprabasal layers.

It localises to the cell junction. It is found in the nucleus. The protein localises to the cytoplasm. The protein resides in the cytoskeleton. Functionally, component of the cornified envelope of keratinocytes. May be involved in the interplay between adherens junctions and desmosomes. The function in the nucleus is not known. In Mus musculus (Mouse), this protein is Kazrin (Kazn).